A 229-amino-acid chain; its full sequence is Enolase-phosphatase E1 (229 aa).

This sequence belongs to the HAD-like hydrolase superfamily. MasA/MtnC family. In terms of assembly, monomer. Mg(2+) serves as cofactor.

It carries out the reaction 5-methylsulfanyl-2,3-dioxopentyl phosphate + H2O = 1,2-dihydroxy-5-(methylsulfanyl)pent-1-en-3-one + phosphate. It functions in the pathway amino-acid biosynthesis; L-methionine biosynthesis via salvage pathway; L-methionine from S-methyl-5-thio-alpha-D-ribose 1-phosphate: step 3/6. Its pathway is amino-acid biosynthesis; L-methionine biosynthesis via salvage pathway; L-methionine from S-methyl-5-thio-alpha-D-ribose 1-phosphate: step 4/6. Bifunctional enzyme that catalyzes the enolization of 2,3-diketo-5-methylthiopentyl-1-phosphate (DK-MTP-1-P) into the intermediate 2-hydroxy-3-keto-5-methylthiopentenyl-1-phosphate (HK-MTPenyl-1-P), which is then dephosphorylated to form the acireductone 1,2-dihydroxy-3-keto-5-methylthiopentene (DHK-MTPene). This chain is Enolase-phosphatase E1, found in Yersinia enterocolitica serotype O:8 / biotype 1B (strain NCTC 13174 / 8081).